The following is a 729-amino-acid chain: Palmitoyltransferase akr1 (729 aa).

The span at 1–11 shows a compositional bias: basic and acidic residues; the sequence is MVHHDGADAHA. Positions 1 to 28 are disordered; sequence MVHHDGADAHAGHAAPAQPPMKSDTATP. At 1–297 the chain is on the cytoplasmic side; sequence MVHHDGADAH…DRRSFMTKFT (297 aa). ANK repeat units lie at residues 76–105, 110–139, 143–172, 176–205, and 209–238; these read EGIT…EINK, SVAT…DPLI, QGYN…PVDV, YGHT…SVHA, and QGFT…DRFA. A run of 2 helical transmembrane segments spans residues 298–318 and 319–339; these read FLWP…MPVF and VGIP…QQVI. Over 340–354 the chain is Cytoplasmic; the sequence is AYAPPDMRQLQKTPW. A helical membrane pass occupies residues 355–375; it reads MAGIFAGSLFLCIMNWLLHIF. Topologically, residues 376–383 are lumenal; the sequence is GSTMFGQD. A helical membrane pass occupies residues 384–404; that stretch reads SAVIPNLLFAFFISMTIWFYI. The Cytoplasmic segment spans residues 405 to 483; it reads RCMVDDPGFV…YNCIGVNNHR (79 aa). A DHHC domain is found at 440-490; the sequence is NFCVTCMIRTPLRSKHCRRCQRCVAKHDHHCPWVYNCIGVNNHRHFFFYLI. Catalysis depends on Cys-470, which acts as the S-palmitoyl cysteine intermediate. Residues 484 to 504 form a helical membrane-spanning segment; it reads HFFFYLINLTLSVVTYDWLTY. Residues 505-534 are Lumenal-facing; sequence RYLSTLSETASDECNILAPSLCRIVNADTY. Residues 535-555 traverse the membrane as a helical segment; the sequence is SLLTAIWASLQLTWVSMLLFV. Topologically, residues 556 to 729 are cytoplasmic; the sequence is QFVQVSSAMT…GYESVAGEEV (174 aa). Disordered stretches follow at residues 587–620 and 709–729; these read STGA…HGHN and TSGG…GEEV. Residues 592-603 are compositionally biased toward pro residues; that stretch reads LNPPSLPAPGPS. Positions 611-620 are enriched in basic residues; it reads HGGRHAHGHN.

The protein belongs to the DHHC palmitoyltransferase family. AKR/ZDHHC17 subfamily.

It localises to the early endosome membrane. The protein resides in the golgi apparatus membrane. The catalysed reaction is L-cysteinyl-[protein] + hexadecanoyl-CoA = S-hexadecanoyl-L-cysteinyl-[protein] + CoA. Its function is as follows. Palmitoyltransferase specific for casein kinase 1. This chain is Palmitoyltransferase akr1 (ptr-1), found in Neurospora crassa (strain ATCC 24698 / 74-OR23-1A / CBS 708.71 / DSM 1257 / FGSC 987).